The sequence spans 428 residues: Glutamate-1-semialdehyde 2,1-aminomutase 1 (428 aa).

Lys-267 is subject to N6-(pyridoxal phosphate)lysine.

This sequence belongs to the class-III pyridoxal-phosphate-dependent aminotransferase family. HemL subfamily. As to quaternary structure, homodimer. Pyridoxal 5'-phosphate is required as a cofactor.

Its subcellular location is the cytoplasm. The catalysed reaction is (S)-4-amino-5-oxopentanoate = 5-aminolevulinate. The protein operates within porphyrin-containing compound metabolism; protoporphyrin-IX biosynthesis; 5-aminolevulinate from L-glutamyl-tRNA(Glu): step 2/2. This Staphylococcus aureus (strain NCTC 8325 / PS 47) protein is Glutamate-1-semialdehyde 2,1-aminomutase 1 (hemL1).